Reading from the N-terminus, the 140-residue chain is FAD synthase (140 aa).

ATP contacts are provided by residues threonine 9–phenylalanine 10, histidine 14–histidine 17, and aspartate 92.

It belongs to the archaeal FAD synthase family. In terms of assembly, homodimer. It depends on a divalent metal cation as a cofactor.

The enzyme catalyses FMN + ATP + H(+) = FAD + diphosphate. Its pathway is cofactor biosynthesis; FAD biosynthesis; FAD from FMN: step 1/1. Catalyzes the transfer of the AMP portion of ATP to flavin mononucleotide (FMN) to produce flavin adenine dinucleotide (FAD) coenzyme. The sequence is that of FAD synthase from Natronomonas pharaonis (strain ATCC 35678 / DSM 2160 / CIP 103997 / JCM 8858 / NBRC 14720 / NCIMB 2260 / Gabara) (Halobacterium pharaonis).